The sequence spans 395 residues: Phosphoglycerate kinase (395 aa).

Substrate-binding positions include 20–22 (DFN), Arg-36, 59–62 (HLGR), Arg-120, and Arg-157. Residues Lys-208, Gly-296, Glu-327, and 353–356 (GGDT) each bind ATP.

The protein belongs to the phosphoglycerate kinase family. In terms of assembly, monomer.

The protein localises to the cytoplasm. It catalyses the reaction (2R)-3-phosphoglycerate + ATP = (2R)-3-phospho-glyceroyl phosphate + ADP. Its pathway is carbohydrate degradation; glycolysis; pyruvate from D-glyceraldehyde 3-phosphate: step 2/5. The sequence is that of Phosphoglycerate kinase from Tropheryma whipplei (strain TW08/27) (Whipple's bacillus).